We begin with the raw amino-acid sequence, 411 residues long: Lissencephaly-1 homolog (411 aa).

Residues 9 to 41 enclose the LisH domain; the sequence is QREELNQAIADYLGSNGYADSLETFRKEADLST. The stretch at 56–83 forms a coiled coil; it reads TSVIRLQKKVMDLEAKLTEAEKEVIEGA. WD repeat units follow at residues 106–147, 148–187, 191–230, 233–272, 275–334, 337–376, and 379–411; these read GHRA…RSLK, GHTD…ECVK, GHDH…CVKT, GHRE…CKVE, DHEH…CLLT, GHDN…CMKT, and AHQH…WECR.

It belongs to the WD repeat LIS1/nudF family.

It is found in the cytoplasm. The protein localises to the cytoskeleton. It localises to the microtubule organizing center. Its subcellular location is the centrosome. Its function is as follows. Positively regulates the activity of the minus-end directed microtubule motor protein dynein. May enhance dynein-mediated microtubule sliding by targeting dynein to the microtubule plus end. Required for several dynein- and microtubule-dependent processes. The chain is Lissencephaly-1 homolog from Drosophila mojavensis (Fruit fly).